Here is a 153-residue protein sequence, read N- to C-terminus: Transcriptional repressor NrdR (153 aa).

A zinc finger lies at Cys3 to Cys34. Residues Leu49–Asp139 form the ATP-cone domain.

The protein belongs to the NrdR family. It depends on Zn(2+) as a cofactor.

Negatively regulates transcription of bacterial ribonucleotide reductase nrd genes and operons by binding to NrdR-boxes. The chain is Transcriptional repressor NrdR from Ehrlichia ruminantium (strain Gardel).